A 179-amino-acid polypeptide reads, in one-letter code: Translation initiation factor IF-3 (179 aa).

Belongs to the IF-3 family. As to quaternary structure, monomer.

Its subcellular location is the cytoplasm. Functionally, IF-3 binds to the 30S ribosomal subunit and shifts the equilibrium between 70S ribosomes and their 50S and 30S subunits in favor of the free subunits, thus enhancing the availability of 30S subunits on which protein synthesis initiation begins. The protein is Translation initiation factor IF-3 of Leptospira borgpetersenii serovar Hardjo-bovis (strain L550).